The primary structure comprises 64 residues: Cytochrome c oxidase subunit 2 (64 aa).

At Met-1 to Ser-14 the chain is on the mitochondrial intermembrane side. A helical membrane pass occupies residues Pro-15–Met-45. At Val-46–Val-64 the chain is on the mitochondrial matrix side.

The protein belongs to the cytochrome c oxidase subunit 2 family. In terms of assembly, component of the cytochrome c oxidase (complex IV, CIV), a multisubunit enzyme composed of 14 subunits. The complex is composed of a catalytic core of 3 subunits MT-CO1, MT-CO2 and MT-CO3, encoded in the mitochondrial DNA, and 11 supernumerary subunits COX4I, COX5A, COX5B, COX6A, COX6B, COX6C, COX7A, COX7B, COX7C, COX8 and NDUFA4, which are encoded in the nuclear genome. The complex exists as a monomer or a dimer and forms supercomplexes (SCs) in the inner mitochondrial membrane with NADH-ubiquinone oxidoreductase (complex I, CI) and ubiquinol-cytochrome c oxidoreductase (cytochrome b-c1 complex, complex III, CIII), resulting in different assemblies (supercomplex SCI(1)III(2)IV(1) and megacomplex MCI(2)III(2)IV(2)). Found in a complex with TMEM177, COA6, COX18, COX20, SCO1 and SCO2. Interacts with TMEM177 in a COX20-dependent manner. Interacts with COX20. Interacts with COX16. The cofactor is Cu cation.

It is found in the mitochondrion inner membrane. The catalysed reaction is 4 Fe(II)-[cytochrome c] + O2 + 8 H(+)(in) = 4 Fe(III)-[cytochrome c] + 2 H2O + 4 H(+)(out). In terms of biological role, component of the cytochrome c oxidase, the last enzyme in the mitochondrial electron transport chain which drives oxidative phosphorylation. The respiratory chain contains 3 multisubunit complexes succinate dehydrogenase (complex II, CII), ubiquinol-cytochrome c oxidoreductase (cytochrome b-c1 complex, complex III, CIII) and cytochrome c oxidase (complex IV, CIV), that cooperate to transfer electrons derived from NADH and succinate to molecular oxygen, creating an electrochemical gradient over the inner membrane that drives transmembrane transport and the ATP synthase. Cytochrome c oxidase is the component of the respiratory chain that catalyzes the reduction of oxygen to water. Electrons originating from reduced cytochrome c in the intermembrane space (IMS) are transferred via the dinuclear copper A center (CU(A)) of subunit 2 and heme A of subunit 1 to the active site in subunit 1, a binuclear center (BNC) formed by heme A3 and copper B (CU(B)). The BNC reduces molecular oxygen to 2 water molecules using 4 electrons from cytochrome c in the IMS and 4 protons from the mitochondrial matrix. The sequence is that of Cytochrome c oxidase subunit 2 (mt-co2) from Scaphirhynchus platorynchus (Shovelnose sturgeon).